Reading from the N-terminus, the 336-residue chain is MDLIIPKDYDPKLSIRETQEAIRYIRETFQDEFGKEMGLNRVSAPMYVEKSSGINDNLNGYEKPVSFTMKDMPGETIEVVHSLAKWKRMALKKYGFGLHEGLYTNMNAIRKDEDLDNFHSSYVDQWDWEKVISKDERNEKTLKETVELIFKVVKHMEHEVWYKFPNAVYHLPDKIHFITSQELEDKYPELEDAKDRENAICKELGCVFVMQIGDVLKSGKRHDGRAPDYDDWKLNGDILFWYEPLQCALELSSMGIRVDEDSMVEQLKKTGDEDRLKLQYHKMILNKELPYTIGGGIGQSRLCMLLLGKAHVGEVQASIWPDEMLKKCEENGIHIL.

Belongs to the class-II aminoacyl-tRNA synthetase family. AsnA subfamily.

The protein resides in the cytoplasm. The catalysed reaction is L-aspartate + NH4(+) + ATP = L-asparagine + AMP + diphosphate + H(+). The protein operates within amino-acid biosynthesis; L-asparagine biosynthesis; L-asparagine from L-aspartate (ammonia route): step 1/1. The polypeptide is Aspartate--ammonia ligase (Ligilactobacillus salivarius (strain UCC118) (Lactobacillus salivarius)).